We begin with the raw amino-acid sequence, 480 residues long: Histone deacetylase 1 (480 aa).

Positions 9 to 321 (RKVCYYYDGD…WTYETAVALD (313 aa)) are histone deacetylase. Positions 27 and 31 each coordinate 1D-myo-inositol 1,4,5,6-tetrakisphosphate. The active site involves H141. Zn(2+) contacts are provided by D176, H178, and D264. R270 contacts 1D-myo-inositol 1,4,5,6-tetrakisphosphate. Residues 376–480 (APGVQMQPIP…KGVKEETKST (105 aa)) form a disordered region. Over residues 388-400 (AVQEDSGDEEEED) the composition is skewed to acidic residues. The segment covering 401 to 416 (PEKRISIRNSDKRISC) has biased composition (basic and acidic residues). Positions 417 to 427 (DEEFSDSEDEG) are enriched in acidic residues. Residues 455–480 (KDEKEEEKAKEEKAEPKGVKEETKST) show a composition bias toward basic and acidic residues.

Belongs to the histone deacetylase family. HD type 1 subfamily. Zn(2+) is required as a cofactor.

The protein resides in the nucleus. It catalyses the reaction N(6)-acetyl-L-lysyl-[histone] + H2O = L-lysyl-[histone] + acetate. The enzyme catalyses N(6)-acetyl-L-lysyl-[protein] + H2O = L-lysyl-[protein] + acetate. It carries out the reaction N(6)-(2E)-butenoyl-L-lysyl-[protein] + H2O = (2E)-2-butenoate + L-lysyl-[protein]. The catalysed reaction is N(6)-[(S)-lactoyl]-L-lysyl-[protein] + H2O = (S)-lactate + L-lysyl-[protein]. With respect to regulation, inositol tetraphosphate (1D-myo-inositol 1,4,5,6-tetrakisphosphate) may act as an intermolecular glue between HDAC1 and N-Cor repressor complex components. Its function is as follows. Histone deacetylase that catalyzes the deacetylation of lysine residues on the N-terminal part of the core histones (H2A, H2B, H3 and H4). Histone deacetylation gives a tag for epigenetic repression and plays an important role in transcriptional regulation, cell cycle progression and developmental events. Histone deacetylases act via the formation of large multiprotein complexes. Also functions as a deacetylase for non-histone proteins. In addition to protein deacetylase activity, also has protein-lysine deacylase activity: acts as a protein decrotonylase and delactylase by mediating decrotonylation ((2E)-butenoyl) and delactylation (lactoyl) of histones, respectively. This Gallus gallus (Chicken) protein is Histone deacetylase 1 (HDAC1).